We begin with the raw amino-acid sequence, 492 residues long: Differentially expressed in FDCP 8 homolog (492 aa).

Gly residues predominate over residues Gly38–Ala51. The interval Gly38–Ala62 is disordered. Phorbol-ester/DAG-type zinc fingers lie at residues Pro161 to Cys214 and Asp400 to Cys453. The interval Arg468 to Glu492 is disordered. Acidic residues predominate over residues Glu473 to Glu492.

This sequence belongs to the DEF8 family.

The protein is Differentially expressed in FDCP 8 homolog of Drosophila melanogaster (Fruit fly).